The chain runs to 261 residues: Chanoclavine-I dehydrogenase easD (261 aa).

7 residues coordinate NADP(+): I18, K48, D66, R132, Y166, K170, and T201. Y166 acts as the Proton donor in catalysis. K170 serves as the catalytic Lowers pKa of active site Tyr.

It belongs to the short-chain dehydrogenases/reductases (SDR) family.

The enzyme catalyses chanoclavine-I + NAD(+) = chanoclavine-I aldehyde + NADH + H(+). It participates in alkaloid biosynthesis; ergot alkaloid biosynthesis. Functionally, chanoclavine-I dehydrogenase; part of the gene cluster that mediates the biosynthesis of fumiclavanine C, a fungal ergot alkaloid. DmaW catalyzes the first step of ergot alkaloid biosynthesis by condensing dimethylallyl diphosphate (DMAP) and tryptophan to form 4-dimethylallyl-L-tryptophan. The second step is catalyzed by the methyltransferase easF that methylates 4-dimethylallyl-L-tryptophan in the presence of S-adenosyl-L-methionine, resulting in the formation of 4-dimethylallyl-L-abrine. The catalase easC and the FAD-dependent oxidoreductase easE then transform 4-dimethylallyl-L-abrine to chanoclavine-I which is further oxidized by EasD in the presence of NAD(+), resulting in the formation of chanoclavine-I aldehyde. EasA reduces chanoclavine-I aldehyde to dihydrochanoclavine-I aldehyde that spontaneously dehydrates to form 6,8-dimethyl-6,7-didehydroergoline. EasG then catalyzes the reduction of 6,8-dimethyl-6,7-didehydroergoline to form festuclavine. Hydrolysis of festuclavine by easM then leads to the formation of fumigaclavine B which is in turn acetylated by easN to fumigaclavine A. Finally, easL catalyzes the conversion of fumigaclavine A into fumigaclavine C by attaching a dimethylallyl moiety to C-2 of the indole nucleus. The chain is Chanoclavine-I dehydrogenase easD from Aspergillus fumigatus (strain ATCC MYA-4609 / CBS 101355 / FGSC A1100 / Af293) (Neosartorya fumigata).